Reading from the N-terminus, the 681-residue chain is Envelope glycoprotein (681 aa).

Residues 1 to 18 form the signal peptide; sequence MKTTCFLISLILIQGTKN. Residues 19 to 648 are Extracellular-facing; that stretch reads LPILEIASNN…GLGGKWWTSD (630 aa). 5 cysteine pairs are disulfide-bonded: C37/C610, C92/C119, C211/C226, C512/C557, and C602/C609. A receptor-binding region spans residues 38-188; that stretch reads SGTLQKTEDV…FSRQGQGYRH (151 aa). N-linked (GlcNAc...) asparagine; by host glycosylation is found at N94, N171, N190, N202, N207, N219, N223, and N255. The interval 223–427 is disordered; the sequence is NQTCAPSKIP…PPTPSSTAQH (205 aa). Polar residues-rich tracts occupy residues 244 to 259, 281 to 290, and 308 to 318; these read LTSTPTDATKLNTTDP, TSDAVTKQGL, and GGNNTNHSQDA. The tract at residues 277-455 is mucin-like region; sequence EPHTTSDAVT…PFLDGLINAP (179 aa). N-linked (GlcNAc...) asparagine; by host glycosylation is found at N310, N313, N325, N326, N337, N344, N345, N350, N360, N408, and N487. A compositionally biased stretch (low complexity) spans 337–347; that stretch reads NTTTISTNNTS. Positions 348 to 414 are enriched in polar residues; that stretch reads KHNFSTLSAP…TAPNTTNEHF (67 aa). Residues 529–549 form a fusion peptide region; that stretch reads GLSWIPFFGPGIEGLYTAVLI. N-linked (GlcNAc...) asparagine; by host glycosylation is present at N564. N619 carries an N-linked (GlcNAc...) asparagine; by host glycan. The chain crosses the membrane as a helical span at residues 649–669; the sequence is WGVLTNLGILLLLSIAVLIAL. Residues 670 to 681 are Cytoplasmic-facing; it reads SCICRIFTKYIG. Residues C671 and C673 are each lipidated (S-palmitoyl cysteine; by host).

This sequence belongs to the filoviruses glycoprotein family. In terms of assembly, homotrimer; each monomer consists of a GP1 and a GP2 subunit linked by disulfide bonds. The resulting peplomers (GP1,2) protrude from the virus surface as spikes. GP1,2 interacts with human CD209 and CLEC4M (collectively referred to as DC-SIGN(R)). Asialoglycoprotein receptor (ASGP-R) may be a liver-specific receptor for GP1,2. Members of the Tyro3 receptor tyrosine kinase family may be cell entry factors interacting with GP1,2. N-glycosylated. In terms of processing, O-glycosylated in the mucin-like region. Post-translationally, specific enzymatic cleavages in vivo yield mature proteins. The precursor is processed into GP1 and GP2 by host cell furin in the trans Golgi, and maybe by other host proteases, to yield the mature GP1 and GP2 proteins. The cleavage site corresponds to the furin optimal cleavage sequence [KR]-X-[KR]-R. GP1 is phosphorylated on serine residues between residues 260 and 273.

Its subcellular location is the virion membrane. The protein localises to the host cell membrane. Its function is as follows. GP1 is responsible for binding to the receptor(s) on target cells. Interacts with CD209/DC-SIGN and CLEC4M/DC-SIGNR which act as cofactors for virus entry into the host cell. Binding to CD209 and CLEC4M, which are respectively found on dendritic cells (DCs), and on endothelial cells of liver sinusoids and lymph node sinuses, facilitate infection of macrophages and endothelial cells. These interactions not only facilitate virus cell entry, but also allow capture of viral particles by DCs and subsequent transmission to susceptible cells without DCs infection (trans infection). In terms of biological role, GP2 acts as a class I viral fusion protein. Under the current model, the protein has at least 3 conformational states: pre-fusion native state, pre-hairpin intermediate state, and post-fusion hairpin state. During viral and target cell membrane fusion, the coiled coil regions (heptad repeats) assume a trimer-of-hairpins structure, positioning the fusion peptide in close proximity to the C-terminal region of the ectodomain. The formation of this structure appears to drive apposition and subsequent fusion of viral and target cell membranes. Responsible for penetration of the virus into the cell cytoplasm by mediating the fusion of the membrane of the endocytosed virus particle with the endosomal membrane. Low pH in endosomes induces an irreversible conformational change in GP2, releasing the fusion hydrophobic peptide. The sequence is that of Envelope glycoprotein (GP) from Lake Victoria marburgvirus (strain Musoke-80) (MARV).